The primary structure comprises 188 residues: Small ribosomal subunit protein uS7 (188 aa).

It belongs to the universal ribosomal protein uS7 family. Part of the 30S ribosomal subunit.

Functionally, one of the primary rRNA binding proteins, it binds directly to 16S rRNA where it nucleates assembly of the head domain of the 30S subunit. Is located at the subunit interface close to the decoding center. The chain is Small ribosomal subunit protein uS7 from Methanococcus maripaludis (strain C6 / ATCC BAA-1332).